Consider the following 282-residue polypeptide: MAATVGVSLKRGFPAAVLGRVGLQFQACRGAQTAAAAAPRIKKFAIYRWDPDKTGDKPRMQTYEVDLNKCGPMVLDALIKIKNEVDSTLTFRRSCREGICGSCAMNINGGNTLACTRRIDTDLSKVSKIYPLPHMYVIKDLVPDLSNFYAQYKSIEPYLKKKDESQEGKQQYLQSIEDREKLDGLYECILCACCSTSCPSYWWNGDKYLGPAVLMQAYRWMIDSRDDFTEERLAKLQDPFSVYRCHTIMNCTQTCPKGLNPGKAIAEIKKMMATYKEKRALA.

Residues 1–30 (MAATVGVSLKRGFPAAVLGRVGLQFQACRG) constitute a mitochondrion transit peptide. The 2Fe-2S ferredoxin-type domain occupies 42–135 (KKFAIYRWDP…VSKIYPLPHM (94 aa)). 2 positions are modified to N6-acetyllysine: lysine 53 and lysine 57. Residues cysteine 95, cysteine 100, cysteine 103, and cysteine 115 each coordinate [2Fe-2S] cluster. The segment at 148-220 (FYAQYKSIEP…PAVLMQAYRW (73 aa)) is interaction with SDHAF1. One can recognise a 4Fe-4S ferredoxin-type domain in the interval 178–208 (DREKLDGLYECILCACCSTSCPSYWWNGDKY). The [4Fe-4S] cluster site is built by cysteine 188, cysteine 191, and cysteine 194. Cysteine 198 provides a ligand contact to [3Fe-4S] cluster. Residue tryptophan 203 participates in a ubiquinone binding. Positions 245 and 251 each coordinate [3Fe-4S] cluster. A [4Fe-4S] cluster-binding site is contributed by cysteine 255.

Belongs to the succinate dehydrogenase/fumarate reductase iron-sulfur protein family. Component of complex II composed of four subunits: the flavoprotein (FP) SDHA, iron-sulfur protein (IP) SDHB, and a cytochrome b560 composed of SDHC and SDHD. Interacts with SDHAF1; the interaction is required for iron-sulfur cluster incorporation into SDHB. The cofactor is [2Fe-2S] cluster. It depends on [3Fe-4S] cluster as a cofactor. Requires [4Fe-4S] cluster as cofactor.

The protein localises to the mitochondrion inner membrane. It carries out the reaction a quinone + succinate = fumarate + a quinol. The catalysed reaction is (R)-malate + a quinone = enol-oxaloacetate + a quinol. The enzyme catalyses (S)-malate + a quinone = enol-oxaloacetate + a quinol. It participates in carbohydrate metabolism; tricarboxylic acid cycle; fumarate from succinate (eukaryal route): step 1/1. With respect to regulation, enol-oxaloacetate inhibits the succinate dehydrogenase activity. Iron-sulfur protein (IP) subunit of the succinate dehydrogenase complex (mitochondrial respiratory chain complex II), responsible for transferring electrons from succinate to ubiquinone (coenzyme Q). SDH also oxidizes malate to the non-canonical enol form of oxaloacetate, enol-oxaloacetate. Enol-oxaloacetate, which is a potent inhibitor of the succinate dehydrogenase activity, is further isomerized into keto-oxaloacetate. The sequence is that of Succinate dehydrogenase [ubiquinone] iron-sulfur subunit, mitochondrial (Sdhb) from Mus musculus (Mouse).